Here is a 106-residue protein sequence, read N- to C-terminus: UPF0145 protein Tpet_0165 (106 aa).

This sequence belongs to the UPF0145 family.

This chain is UPF0145 protein Tpet_0165, found in Thermotoga petrophila (strain ATCC BAA-488 / DSM 13995 / JCM 10881 / RKU-1).